We begin with the raw amino-acid sequence, 938 residues long: Protein O-mannosyl-transferase Tmtc2 (938 aa).

M1 is a topological domain (cytoplasmic). The chain crosses the membrane as a helical span at residues 2–22 (PSLEPWLWGDSCSWLGMLAML). The Extracellular portion of the chain corresponds to 23–34 (RLRLHKSNMDFT). A helical transmembrane segment spans residues 35 to 55 (CLFCCSLAFVLYLNTLGAGFV). At 56–108 (YDDRRAILANADVSGGTPWQRSFSNDFWGTPLTDSGSHGSWRPLCVLSFRLNY) the chain is on the cytoplasmic side. A helical transmembrane segment spans residues 109–129 (LIGGGFAPWGFHLVNNLLHCV). Residues 130–139 (ATALVVRVAR) are Extracellular-facing. The chain crosses the membrane as a helical span at residues 140–160 (TLLASVWAVLAAGALFAAHPI). Topologically, residues 161–164 (HTEA) are cytoplasmic. A helical membrane pass occupies residues 165 to 185 (VAGVVGRADLAACVCYLLTYL). The Extracellular segment spans residues 186 to 208 (SYLRHMRWRESGDPRQWLALGAT). The helical transmembrane segment at 209–229 (LILAAAGLLCKETAITALLVC) threads the bilayer. Residues 230 to 249 (ALFDVMRGLSGQVDKQRLRS) lie on the Cytoplasmic side of the membrane. A helical transmembrane segment spans residues 250–270 (VCIVLGALFCMAYCRLVIVPG). At 271–291 (PQTAFSSADNPIARTPSAWTR) the chain is on the extracellular side. A helical transmembrane segment spans residues 292–312 (LLTFLYLPVFNLRLLLQPNVL). Over 313–510 (SFDWGMDALP…HACVLIMSLS (198 aa)) the chain is Cytoplasmic. A disordered region spans residues 450-480 (RSSSSCSNSTNSSSSSSSSSSSSSSSSSSLS). A helical transmembrane segment spans residues 511-531 (FLALPFLPASNLLFYVGFVVA). Topologically, residues 532–533 (ER) are extracellular. Residues 534-554 (LLYLPSVGFCLLVGYGVSKLM) traverse the membrane as a helical segment. The Cytoplasmic segment spans residues 555–562 (SCNQRTRN). Residues 563-580 (ILLLSFSLLLAAMSLRTL) traverse the membrane as a helical segment. The Extracellular segment spans residues 581 to 938 (RRNADWRDEE…NLAKLGVTNV (358 aa)). TPR repeat units follow at residues 602-635 (PKAL…RPNM), 636-669 (ADVH…RPNL), 670-703 (AVAY…DGAA), 715-748 (SSAY…LPGL), 753-786 (EILY…QPNQ), 788-821 (AAHL…APEQ), 822-855 (ASVY…APND), 856-889 (YTLV…RPGD), and 890-923 (AHAH…QPGD). N-linked (GlcNAc...) asparagine glycosylation is present at N800.

The protein belongs to the TMTC family.

The protein resides in the membrane. Its subcellular location is the endoplasmic reticulum. The catalysed reaction is a di-trans,poly-cis-dolichyl beta-D-mannosyl phosphate + L-seryl-[protein] = 3-O-(alpha-D-mannosyl)-L-seryl-[protein] + a di-trans,poly-cis-dolichyl phosphate + H(+). It catalyses the reaction a di-trans,poly-cis-dolichyl beta-D-mannosyl phosphate + L-threonyl-[protein] = 3-O-(alpha-D-mannosyl)-L-threonyl-[protein] + a di-trans,poly-cis-dolichyl phosphate + H(+). Its pathway is protein modification; protein glycosylation. Transfers mannosyl residues to the hydroxyl group of serine or threonine residues. This is Protein O-mannosyl-transferase Tmtc2 from Drosophila melanogaster (Fruit fly).